Here is a 507-residue protein sequence, read N- to C-terminus: MTSTKDKTAITPTRENDYPEWYQQVVKASDLAENSPVRGSMVIKPWGYGIWENIQRQLDDRIKETGHENAYFPLFIPLSFLEKEAAHIEGFAKECAVVTHHRLEEKDGRLIPAGPLEEPLIVRPTSETIIGDSFSRWVESYRDLPLLINQWANVVRWEMRPRIFLRTTEFLWQEGHTAHATHEEALQETMTMLEVYRSFVEDVLAIPVIVGEKSPGERFPGAENTFTLEAMMQDRKALQSCTSHYLGQNFAKGSNIRFSNMEGQLEYAYTTSWGMTTRLIGSLIMCHGDDDGLRLPPRIAHKQIVIVPVIPKPELEAQVLEYAENLAAELRKQIFYGKPLTVHIDKRDKRGGEKNWEWVKKGVPLRLEVGPRDINEQAVMVARRDQSPKNKQSLPKQQFVQQAASILEDIQRNYYVQAATYRDQHIYRHLETFEEMRAFFTPKNEEKPEIHGGFVLAKWCGDPVTEEMLSDLKVTIRCLPVKQSGTKGRCILTGREATLDAIFAKSY.

It belongs to the class-II aminoacyl-tRNA synthetase family. ProS type 3 subfamily. As to quaternary structure, homodimer.

The protein resides in the cytoplasm. It carries out the reaction tRNA(Pro) + L-proline + ATP = L-prolyl-tRNA(Pro) + AMP + diphosphate. Catalyzes the attachment of proline to tRNA(Pro) in a two-step reaction: proline is first activated by ATP to form Pro-AMP and then transferred to the acceptor end of tRNA(Pro). The polypeptide is Proline--tRNA ligase (Protochlamydia amoebophila (strain UWE25)).